Consider the following 165-residue polypeptide: Nucleotide-binding protein PMT9312_0481 (165 aa).

The protein belongs to the YajQ family.

In terms of biological role, nucleotide-binding protein. This is Nucleotide-binding protein PMT9312_0481 from Prochlorococcus marinus (strain MIT 9312).